The following is a 382-amino-acid chain: MSSKRKLFEEVGAAAATRPAAQPGLIDKRHSGARKAIRVWLQILFALVFIMIAVGGLTRLTDSGLSITEWRPLTGALPPLSEAEWQSEFEKYQAIDEFRIQNQWMQMADFKVIYWWEWGHRQLGRVIGVVWALGFGYFLVRRQVPAGWHGKLLFLGLLGGAQGAIGWWMVASGVTQGEGVTDVASYRLATHLGLAFVILGFIAWYIMELGRSAPDLMQARRIKEGKQWGMSTGLLHFTFLQILLGALVAGIDAGRSYTDWPMMGGQWFPSTALVLEPIWRNFFESPGLVQFMHRVTGYVLILFTVVVWLRGRRSSHPHTRFAFNAVLAAMTLQIVLGIVTVLYGAPAHIAIFHQTLAVIVWVLILRARFLSGYPIATSVRGT.

A run of 7 helical transmembrane segments spans residues 37–57 (IRVWLQILFALVFIMIAVGGL), 126–146 (VIGVVWALGFGYFLVRRQVPA), 152–172 (LLFLGLLGGAQGAIGWWMVAS), 188–208 (LATHLGLAFVILGFIAWYIME), 231–251 (STGLLHFTFLQILLGALVAGI), 288–308 (LVQFMHRVTGYVLILFTVVVW), and 332–352 (LQIVLGIVTVLYGAPAHIAIF). Histidine 293 lines the heme pocket. Histidine 353 provides a ligand contact to heme. A helical membrane pass occupies residues 356–376 (LAVIVWVLILRARFLSGYPIA).

This sequence belongs to the COX15/CtaA family. Type 2 subfamily. In terms of assembly, interacts with CtaB. Requires heme b as cofactor.

Its subcellular location is the cell membrane. It carries out the reaction Fe(II)-heme o + 2 A + H2O = Fe(II)-heme a + 2 AH2. It participates in porphyrin-containing compound metabolism; heme A biosynthesis; heme A from heme O: step 1/1. In terms of biological role, catalyzes the conversion of heme O to heme A by two successive hydroxylations of the methyl group at C8. The first hydroxylation forms heme I, the second hydroxylation results in an unstable dihydroxymethyl group, which spontaneously dehydrates, resulting in the formyl group of heme A. This Roseobacter denitrificans (strain ATCC 33942 / OCh 114) (Erythrobacter sp. (strain OCh 114)) protein is Heme A synthase.